The following is a 363-amino-acid chain: Adenosine deaminase (363 aa).

At alanine 2 the chain carries N-acetylalanine. 2 residues coordinate Zn(2+): histidine 15 and histidine 17. Residues histidine 17 and aspartate 19 each contribute to the substrate site. Lysine 54 is modified (N6-acetyllysine). Residue glycine 184 coordinates substrate. Histidine 214 is a binding site for Zn(2+). The active-site Proton donor is glutamate 217. Position 232 is an N6-acetyllysine (lysine 232). Zn(2+) is bound at residue aspartate 295. A substrate-binding site is contributed by aspartate 296.

Belongs to the metallo-dependent hydrolases superfamily. Adenosine and AMP deaminases family. In terms of assembly, interacts with DPP4 (via extracellular domain). Interacts with PLG (via Kringle 4 domain); the interaction stimulates PLG activation when in complex with DPP4. Zn(2+) is required as a cofactor. Expressed in gastrointestinal tissues (at protein level).

It is found in the cell membrane. The protein localises to the cell junction. It localises to the cytoplasmic vesicle lumen. The protein resides in the cytoplasm. Its subcellular location is the lysosome. The catalysed reaction is adenosine + H2O + H(+) = inosine + NH4(+). The enzyme catalyses 2'-deoxyadenosine + H2O + H(+) = 2'-deoxyinosine + NH4(+). It carries out the reaction cordycepin + H2O + H(+) = 3'-deoxyinosine + NH4(+). Its function is as follows. Catalyzes the hydrolytic deamination of adenosine and 2-deoxyadenosine. Plays an important role in purine metabolism and in adenosine homeostasis. Modulates signaling by extracellular adenosine, and so contributes indirectly to cellular signaling events. Acts as a positive regulator of T-cell coactivation, by binding DPP4. Its interaction with DPP4 regulates lymphocyte-epithelial cell adhesion. Enhances dendritic cell immunogenicity by affecting dendritic cell costimulatory molecule expression and cytokines and chemokines secretion. Enhances CD4+ T-cell differentiation and proliferation. Acts as a positive modulator of adenosine receptors ADORA1 and ADORA2A, by enhancing their ligand affinity via conformational change. Stimulates plasminogen activation. Plays a role in male fertility. Plays a protective role in early postimplantation embryonic development. Also responsible for the deamination of cordycepin (3'-deoxyadenosine), a fungal natural product that shows antitumor, antibacterial, antifungal, antivirus, and immune regulation properties. This is Adenosine deaminase (ADA) from Bos taurus (Bovine).